Reading from the N-terminus, the 252-residue chain is Small ribosomal subunit protein uS3 (252 aa).

A KH type-2 domain is found at 38–106 (IRKYIHARLS…EVQINIFEIK (69 aa)). The segment at 214-252 (PLAGMDKKQSGTGGGKGGDAPRGKSNFNKGGKPDARKRK) is disordered. Positions 224–233 (GTGGGKGGDA) are enriched in gly residues.

This sequence belongs to the universal ribosomal protein uS3 family. Part of the 30S ribosomal subunit. Forms a tight complex with proteins S10 and S14.

Functionally, binds the lower part of the 30S subunit head. Binds mRNA in the 70S ribosome, positioning it for translation. The sequence is that of Small ribosomal subunit protein uS3 from Flavobacterium johnsoniae (strain ATCC 17061 / DSM 2064 / JCM 8514 / BCRC 14874 / CCUG 350202 / NBRC 14942 / NCIMB 11054 / UW101) (Cytophaga johnsonae).